The chain runs to 591 residues: Aspartate--tRNA(Asp/Asn) ligase (591 aa).

An L-aspartate-binding site is contributed by Glu174. Residues 198 to 201 (QLFK) are aspartate. L-aspartate is bound at residue Arg220. ATP-binding positions include 220–222 (RDE) and Gln229. His450 provides a ligand contact to L-aspartate. ATP is bound at residue Glu483. Arg490 is a binding site for L-aspartate. Residue 535 to 538 (GLDR) coordinates ATP.

This sequence belongs to the class-II aminoacyl-tRNA synthetase family. Type 1 subfamily. In terms of assembly, homodimer.

It is found in the cytoplasm. It carries out the reaction tRNA(Asx) + L-aspartate + ATP = L-aspartyl-tRNA(Asx) + AMP + diphosphate. Aspartyl-tRNA synthetase with relaxed tRNA specificity since it is able to aspartylate not only its cognate tRNA(Asp) but also tRNA(Asn). Reaction proceeds in two steps: L-aspartate is first activated by ATP to form Asp-AMP and then transferred to the acceptor end of tRNA(Asp/Asn). In Pseudomonas aeruginosa (strain LESB58), this protein is Aspartate--tRNA(Asp/Asn) ligase.